Here is a 573-residue protein sequence, read N- to C-terminus: uncharacterized protein (573 aa).

The 284-residue stretch at 15-298 (AGIALILMLT…FPFLIMIFTR (284 aa)) folds into the ABC transmembrane type-1 domain. The next 6 membrane-spanning stretches (helical) occupy residues 17 to 37 (IALILMLTELAVELMQPLLIA), 52 to 72 (VWIWGTVMIGLTVLSFAAGML), 127 to 147 (IFMSLRFMLRAPLMIAGGIVL), 153 to 173 (VKLGFFLLVTIPILILFLLWV), 238 to 258 (FTMPVLMLLMNLCILLILWAG), and 275 to 295 (IINYATRITGALSMFPFLIMI). Residues 330–563 (IEFQHVSFRY…SQLYKRIYES (234 aa)) form the ABC transporter domain. Residue 364-371 (GATGSGKS) participates in ATP binding.

The protein belongs to the ABC transporter superfamily.

The protein localises to the cell membrane. This is an uncharacterized protein from Bacillus subtilis (strain 168).